The chain runs to 501 residues: Probable Xaa-Pro aminopeptidase pepP (501 aa).

The disordered stretch occupies residues 1–25 (MNYHSFLPLRRSSLSHSTTPPSKSR). A compositionally biased stretch (polar residues) spans 12 to 25 (SSLSHSTTPPSKSR). The Mn(2+) site is built by Asp-298, Asp-309, Glu-432, and Glu-472.

This sequence belongs to the peptidase M24B family. Mn(2+) is required as a cofactor.

It catalyses the reaction Release of any N-terminal amino acid, including proline, that is linked to proline, even from a dipeptide or tripeptide.. Its function is as follows. Catalyzes the removal of a penultimate prolyl residue from the N-termini of peptides. The protein is Probable Xaa-Pro aminopeptidase pepP (pepP) of Metarhizium acridum (strain CQMa 102).